An 81-amino-acid chain; its full sequence is Large ribosomal subunit protein bL31B (81 aa).

It belongs to the bacterial ribosomal protein bL31 family. Type B subfamily. Part of the 50S ribosomal subunit.

This Limosilactobacillus fermentum (strain NBRC 3956 / LMG 18251) (Lactobacillus fermentum) protein is Large ribosomal subunit protein bL31B.